The primary structure comprises 90 residues: Defensin-like protein 293 (90 aa).

Residues 1-26 form the signal peptide; that stretch reads MTSRAKSLFIFFFLISCTFMLLETDA. 3 disulfide bridges follow: Cys63/Cys83, Cys69/Cys88, and Cys75/Cys90.

Belongs to the DEFL family.

Its subcellular location is the secreted. The protein is Defensin-like protein 293 of Arabidopsis thaliana (Mouse-ear cress).